Consider the following 125-residue polypeptide: Large ribosomal subunit protein bL12 (125 aa).

It belongs to the bacterial ribosomal protein bL12 family. As to quaternary structure, homodimer. Part of the ribosomal stalk of the 50S ribosomal subunit. Forms a multimeric L10(L12)X complex, where L10 forms an elongated spine to which 2 to 4 L12 dimers bind in a sequential fashion. Binds GTP-bound translation factors.

In terms of biological role, forms part of the ribosomal stalk which helps the ribosome interact with GTP-bound translation factors. Is thus essential for accurate translation. This Heliobacterium modesticaldum (strain ATCC 51547 / Ice1) protein is Large ribosomal subunit protein bL12.